Reading from the N-terminus, the 199-residue chain is MESLDDIVREIMSCRKCDLHKTKTNYVPGVGNEKAEIVFVGEAPGRDEDLKGEPFVGAAGKLLTEMLASIGLRREDVYITNVLKCRPPNNRDPTPEEVEKCGDYLVRQLEAIRPNVIVCLGRFAAQFIFNLFDLEFTTISRVKGKVYEVERWGKKVKVIAIYHPAAVLYRPQLREEYESDFKKIGELCGKKQPTLFDYL.

[4Fe-4S] cluster-binding residues include cysteine 14 and cysteine 17. Residues 41–43, phenylalanine 55, and asparagine 81 contribute to the uracil site; that span reads GEA. The tract at residues 77-114 is pseudo-FCL; the sequence is VYITNVLKCRPPNNRDPTPEEVEKCGDYLVRQLEAIRP. Cysteine 85 and cysteine 101 together coordinate [4Fe-4S] cluster. Histidine 163 contributes to the uracil binding site.

The protein belongs to the uracil-DNA glycosylase (UDG) superfamily. Type 4 (UDGa) family.

The enzyme catalyses Hydrolyzes single-stranded DNA or mismatched double-stranded DNA and polynucleotides, releasing free uracil.. With respect to regulation, product-inhibited by both uracil and apurinic/apyrimidinic sites. Removes uracil bases that are present in DNA as a result of either deamination of cytosine or misincorporation of dUMP instead of dTMP. Can remove uracil from double-stranded DNA containing either a U/G or U/A base pair as well as from single-stranded DNA. In Archaeoglobus fulgidus (strain ATCC 49558 / DSM 4304 / JCM 9628 / NBRC 100126 / VC-16), this protein is Type-4 uracil-DNA glycosylase.